A 496-amino-acid polypeptide reads, in one-letter code: Tyrosine-protein kinase Srms (496 aa).

Residues 55–116 (PRARLFRALY…PVTYLAKATP (62 aa)) form the SH3 domain. One can recognise an SH2 domain in the interval 124-216 (WYFSGISRAQ…LIQNPLLQPC (93 aa)). One can recognise a Protein kinase domain in the interval 234–495 (FVLRRKLGEG…AINRRLHLGL (262 aa)). Residues 240–248 (LGEGFFGEV) and Lys-262 contribute to the ATP site. Asp-354 (proton acceptor) is an active-site residue. A Phosphotyrosine; by autocatalysis modification is found at Tyr-384.

This sequence belongs to the protein kinase superfamily. Tyr protein kinase family. SRC subfamily. Interacts (via the SH2 and SH3 domains) with DOK1. Interacts with KHDRBS1/SAM68 and VIM. Higher expression in liver, lung, thymus and skin than in brain, kidney, heart and spleen. In skin, highly expressed in keratinocytes. Abundant in lung, liver, spleen, kidney and testis and is also detected in the cerebrum.

The protein localises to the cytoplasm. The enzyme catalyses L-tyrosyl-[protein] + ATP = O-phospho-L-tyrosyl-[protein] + ADP + H(+). Functionally, non-receptor tyrosine-protein kinase which phosphorylates DOK1 on tyrosine residues. Also phosphorylates KHDRBS1/SAM68 and VIM on tyrosine residues. Phosphorylation of KHDRBS1 is EGF-dependent. Phosphorylates OTUB1, promoting deubiquitination of RPTOR. This is Tyrosine-protein kinase Srms (Srms) from Mus musculus (Mouse).